A 311-amino-acid polypeptide reads, in one-letter code: Manganese-dependent ADP-ribose/CDP-alcohol diphosphatase (311 aa).

Residues D17, Q19, D64, N99, H218, H255, and H257 each coordinate Zn(2+).

It belongs to the ADPRibase-Mn family. Monomer. Mg(2+) is required as a cofactor.

The catalysed reaction is CDP-choline + H2O = phosphocholine + CMP + 2 H(+). It catalyses the reaction ADP-D-ribose + H2O = D-ribose 5-phosphate + AMP + 2 H(+). The enzyme catalyses CDP-glycerol + H2O = sn-glycerol 3-phosphate + CMP + 2 H(+). Functionally, hydrolyzes ADP-ribose, IDP-ribose, CDP-glycerol, CDP-choline and CDP-ethanolamine, but not other non-reducing ADP-sugars or CDP-glucose. In Arabidopsis thaliana (Mouse-ear cress), this protein is Manganese-dependent ADP-ribose/CDP-alcohol diphosphatase.